Reading from the N-terminus, the 206-residue chain is Peptidyl-tRNA hydrolase (206 aa).

TRNA is bound at residue tyrosine 14. Residue histidine 19 is the Proton acceptor of the active site. 2 residues coordinate tRNA: tyrosine 64 and asparagine 66. Residues 182–206 (FNQKNKKKKEKEQPEAATDQLLENK) are disordered.

Belongs to the PTH family. In terms of assembly, monomer.

The protein localises to the cytoplasm. The enzyme catalyses an N-acyl-L-alpha-aminoacyl-tRNA + H2O = an N-acyl-L-amino acid + a tRNA + H(+). Its function is as follows. Hydrolyzes ribosome-free peptidyl-tRNAs (with 1 or more amino acids incorporated), which drop off the ribosome during protein synthesis, or as a result of ribosome stalling. Catalyzes the release of premature peptidyl moieties from peptidyl-tRNA molecules trapped in stalled 50S ribosomal subunits, and thus maintains levels of free tRNAs and 50S ribosomes. The chain is Peptidyl-tRNA hydrolase from Desulforamulus reducens (strain ATCC BAA-1160 / DSM 100696 / MI-1) (Desulfotomaculum reducens).